Here is a 1776-residue protein sequence, read N- to C-terminus: Signal-induced proliferation-associated 1-like protein 3 (1776 aa).

2 disordered regions span residues 41-157 (AQNG…GRAF) and 240-325 (PGAL…EASR). Residues 54–69 (PAATTTRPSPTTPAMP) show a composition bias toward low complexity. 2 stretches are compositionally biased toward polar residues: residues 89 to 99 (EQSNPSPSQDT) and 112 to 129 (RNLQ…SSGS). A Phosphoserine modification is found at Ser-94. Residues 131-140 (AFHRLSRRRS) show a composition bias toward basic residues. Ser-140 is subject to Phosphoserine. The span at 257-268 (GQPTKDSLQSLQ) shows a compositional bias: polar residues. A Phosphoserine modification is found at Ser-394. The segment at 438 to 461 (SRASVGSPGGSSEAHMAEPTLSTH) is disordered. Positions 605 to 822 (LLKLDEQGLC…RTRQEYLKDL (218 aa)) constitute a Rap-GAP domain. Residues 960-1024 (DMTLRRNGLG…DQMIDLLRTS (65 aa)) enclose the PDZ domain. 3 disordered regions span residues 1040-1104 (PRRG…AQSL), 1117-1164 (RESQ…ATYA), and 1184-1632 (DPHF…LDPG). 2 stretches are compositionally biased toward polar residues: residues 1074–1104 (APWQ…AQSL) and 1151–1160 (PSGSFSTPGS). Residues 1190 to 1201 (DGMSSGDSSSGG) are compositionally biased toward low complexity. The segment covering 1239–1255 (SRQDAAGKDSPNRHSKG) has biased composition (basic and acidic residues). Low complexity predominate over residues 1260–1275 (SSHSSSNTLSSNASSS). Residues 1298–1316 (GGSSDSGIDTTLYTSSPSC) are compositionally biased toward polar residues. The span at 1344–1357 (SAGRPHPVDRRREV) shows a compositional bias: basic and acidic residues. The residue at position 1358 (Ser-1358) is a Phosphoserine. At Thr-1381 the chain carries Phosphothreonine. The span at 1409–1436 (VYKTASAETPRPSQLSQCSPFQLSTSVP) shows a compositional bias: polar residues. Lys-1442 is subject to N6-acetyllysine. Over residues 1503–1512 (TIEDDLKKLI) the composition is skewed to basic and acidic residues. Polar residues-rich tracts occupy residues 1526–1541 (GQSP…SDES) and 1566–1578 (LFTS…SSTL). 2 positions are modified to phosphoserine: Ser-1538 and Ser-1541. A compositionally biased stretch (low complexity) spans 1589–1601 (PPSGAPSTTPATG). Ser-1614 and Ser-1617 each carry phosphoserine. The segment covering 1620 to 1630 (DGRDRPLRRLD) has biased composition (basic and acidic residues). Position 1672 is a phosphoserine (Ser-1672). The interval 1678–1705 (AHSPVHSHLSLERGPQTPRATPTMSEES) is disordered. Thr-1694 and Thr-1698 each carry phosphothreonine. Residues 1715 to 1769 (QLEVMLKQLHTDLQKEKQDKVVLQSEVASLRQNNQRLQEESQAASEQLRKFAELF) are a coiled coil.

The protein localises to the apical cell membrane. Functionally, plays a critical role in epithelial cell morphogenesis, polarity, adhesion and cytoskeletal organization in the lens. This is Signal-induced proliferation-associated 1-like protein 3 (Sipa1l3) from Mus musculus (Mouse).